The sequence spans 148 residues: Large ribosomal subunit protein bL9 (148 aa).

The protein belongs to the bacterial ribosomal protein bL9 family.

In terms of biological role, binds to the 23S rRNA. The protein is Large ribosomal subunit protein bL9 of Campylobacter concisus (strain 13826).